We begin with the raw amino-acid sequence, 218 residues long: Uracil-DNA glycosylase (218 aa).

The active-site Proton acceptor is the Asp-59.

Belongs to the uracil-DNA glycosylase (UDG) superfamily. UNG family.

Its subcellular location is the cytoplasm. It catalyses the reaction Hydrolyzes single-stranded DNA or mismatched double-stranded DNA and polynucleotides, releasing free uracil.. Excises uracil residues from the DNA which can arise as a result of misincorporation of dUMP residues by DNA polymerase or due to deamination of cytosine. This chain is Uracil-DNA glycosylase, found in Staphylococcus aureus (strain MSSA476).